We begin with the raw amino-acid sequence, 103 residues long: Small ribosomal subunit protein uS10 (103 aa).

Belongs to the universal ribosomal protein uS10 family. In terms of assembly, part of the 30S ribosomal subunit.

Involved in the binding of tRNA to the ribosomes. The protein is Small ribosomal subunit protein uS10 of Pseudomonas aeruginosa (strain LESB58).